The primary structure comprises 204 residues: MAEMIHLPRSTFERLKMYRKVLEATKKPYISSDEIARFLEINPDLVRKDFSYLNCQGKPRVGYDVEELRKELDDLFGVNNTTNMIIVGANDLARALLSLDFSKAGVKVVAVFDTERENVGKFIGEFAVRELDVLERVIRRFDAEIAALCVSKDRAQATAEFLIEKGIKAVWNFTGVHLDLPEGVIVVEEDLTQSLLTIKHLLKK.

The segment at residues 17-53 (MYRKVLEATKKPYISSDEIARFLEINPDLVRKDFSYL) is a DNA-binding region (H-T-H motif).

This sequence belongs to the transcriptional regulatory Rex family. Homodimer.

The protein localises to the cytoplasm. Functionally, modulates transcription in response to changes in cellular NADH/NAD(+) redox state. The sequence is that of Redox-sensing transcriptional repressor Rex 2 (rex2) from Thermotoga maritima (strain ATCC 43589 / DSM 3109 / JCM 10099 / NBRC 100826 / MSB8).